We begin with the raw amino-acid sequence, 626 residues long: Chaperone protein HtpG (626 aa).

Residues 1–341 (METKQFKAES…SEDLSLNISR (341 aa)) are a; substrate-binding. The interval 342-552 (EMLQHDRQLK…EGEISIEMEK (211 aa)) is b. Residues 553 to 626 (ILSAMPNNEN…FSNSICKLMI (74 aa)) are c.

The protein belongs to the heat shock protein 90 family. In terms of assembly, homodimer.

The protein resides in the cytoplasm. Functionally, molecular chaperone. Has ATPase activity. In Alkaliphilus oremlandii (strain OhILAs) (Clostridium oremlandii (strain OhILAs)), this protein is Chaperone protein HtpG.